The primary structure comprises 99 residues: SAGA-associated factor 11 (99 aa).

Residues 71-92 (FYCENCGREVSGNRFAAHLQRC) form an SGF11-type zinc finger.

Belongs to the SGF11 family. As to quaternary structure, component of the 1.8 MDa SAGA transcription coactivator-HAT complex. SAGA is built of 5 distinct domains with specialized functions. Within the SAGA complex, SUS1, SGF11, SGF73 and UBP8 form an additional subcomplex of SAGA called the DUB module (deubiquitination module). Interacts directly with SGF73, SUS1 and UBP8.

It localises to the nucleus. Functionally, functions as a component of the transcription regulatory histone acetylation (HAT) complex SAGA. At the promoters, SAGA is required for recruitment of the basal transcription machinery. It influences RNA polymerase II transcriptional activity through different activities such as TBP interaction and promoter selectivity, interaction with transcription activators, and chromatin modification through histone acetylation and deubiquitination. SAGA acetylates nucleosomal histone H3 to some extent (to form H3K9ac, H3K14ac, H3K18ac and H3K23ac). SAGA interacts with DNA via upstream activating sequences (UASs). Involved in transcriptional regulation of a subset of SAGA-regulated genes. Within the SAGA complex, participates in a subcomplex, that specifically deubiquitinates histones H2B. The sequence is that of SAGA-associated factor 11 from Candida glabrata (strain ATCC 2001 / BCRC 20586 / JCM 3761 / NBRC 0622 / NRRL Y-65 / CBS 138) (Yeast).